The following is an 835-amino-acid chain: Translation initiation factor IF-2 (835 aa).

The segment at 1–243 (MSDTDGKKTL…RARQKAMGGA (243 aa)) is disordered. Low complexity predominate over residues 43–67 (VPKPGAGKPSAGGSSPAGDPSRRPA). Basic and acidic residues-rich tracts occupy residues 85–147 (KARE…EAKR), 157–166 (EAPKAERSAE), and 175–205 (EGGD…DGRR). The region spanning 332–500 (PRPPVITIMG…AIALQAEILE (169 aa)) is the tr-type G domain. Residues 341-348 (GHVDHGKT) form a G1 region. 341–348 (GHVDHGKT) contacts GTP. The segment at 366–370 (GITQH) is G2. The tract at residues 388–391 (DTPG) is G3. GTP is bound by residues 388 to 392 (DTPGH) and 442 to 445 (NKID). Positions 442 to 445 (NKID) are G4. A G5 region spans residues 478 to 480 (SAK).

It belongs to the TRAFAC class translation factor GTPase superfamily. Classic translation factor GTPase family. IF-2 subfamily.

Its subcellular location is the cytoplasm. Its function is as follows. One of the essential components for the initiation of protein synthesis. Protects formylmethionyl-tRNA from spontaneous hydrolysis and promotes its binding to the 30S ribosomal subunits. Also involved in the hydrolysis of GTP during the formation of the 70S ribosomal complex. The polypeptide is Translation initiation factor IF-2 (Ruegeria pomeroyi (strain ATCC 700808 / DSM 15171 / DSS-3) (Silicibacter pomeroyi)).